The chain runs to 284 residues: MKLVIVSGRSGSGKSVALRVLEDLGYYCVDNLPLPLIGTLLEQLKGSNDLVAISVDVRNLPEQDKVLVKQLASLPPDTELTSFFLNSSDKILLKRYSETRRLHPLSKSQVSLQEAIKLEGKLLEPMSKLVDHYIDTSNLNIYDLSDQVRQILLGSVDKELVINFESFGFKHGMPTEADFMFDVRFLPNPHWELALRPLTGLDEPVAEFLNRQPLVNKFIWQIENLLETWLPHLERNNRSYLTVAIGCTGGQHRSVYVAEQLAKRFSNGKHKVYARHRELNNAKA.

8-15 (GRSGSGKS) is a binding site for ATP. 56–59 (DVRN) is a GTP binding site.

The protein belongs to the RapZ-like family.

In terms of biological role, displays ATPase and GTPase activities. The protein is Nucleotide-binding protein Sbal195_0713 of Shewanella baltica (strain OS195).